The primary structure comprises 285 residues: Protein HEXIM1 (285 aa).

Disordered stretches follow at residues 1-56 and 132-196; these read MSEV…QNPG and LMED…LQKD. Residues 23–36 show a composition bias toward basic and acidic residues; sequence GGWHHPVEREEHPV. Acidic residues predominate over residues 168 to 180; it reads TDDDLEEEEDEAG. Positions 213-284 form a coiled coil; sequence SKQDLIKEYL…QEGKQVAADS (72 aa).

It belongs to the HEXIM family. Homooligomer and heterooligomer. Core component of the 7SK RNP complex.

Its subcellular location is the nucleus. It is found in the cytoplasm. In terms of biological role, transcriptional regulator which functions as a general RNA polymerase II transcription inhibitor. Core component of the 7SK RNP complex: in cooperation with 7SK snRNA sequesters P-TEFb in a large inactive 7SK snRNP complex preventing RNA polymerase II phosphorylation and subsequent transcriptional elongation. Plays a role in the regulation of DNA virus-mediated innate immune response by assembling into the HDP-RNP complex, a complex that serves as a platform for IRF3 phosphorylation and subsequent innate immune response activation through the cGAS-STING pathway. This is Protein HEXIM1 (hexim1) from Xenopus laevis (African clawed frog).